Here is a 384-residue protein sequence, read N- to C-terminus: S-adenosylmethionine synthase (384 aa).

Residue H15 participates in ATP binding. D17 contacts Mg(2+). E43 contributes to the K(+) binding site. L-methionine-binding residues include E56 and Q99. The segment at 99-109 is flexible loop; that stretch reads QSPDINQGVDR. Residues 164–166, 230–231, D239, 245–246, A262, and K266 contribute to the ATP site; these read DAK, RF, and RK. D239 is a binding site for L-methionine. An L-methionine-binding site is contributed by K270.

This sequence belongs to the AdoMet synthase family. In terms of assembly, homotetramer; dimer of dimers. Requires Mg(2+) as cofactor. K(+) is required as a cofactor.

It localises to the cytoplasm. The enzyme catalyses L-methionine + ATP + H2O = S-adenosyl-L-methionine + phosphate + diphosphate. It functions in the pathway amino-acid biosynthesis; S-adenosyl-L-methionine biosynthesis; S-adenosyl-L-methionine from L-methionine: step 1/1. Its function is as follows. Catalyzes the formation of S-adenosylmethionine (AdoMet) from methionine and ATP. The overall synthetic reaction is composed of two sequential steps, AdoMet formation and the subsequent tripolyphosphate hydrolysis which occurs prior to release of AdoMet from the enzyme. This is S-adenosylmethionine synthase from Photobacterium profundum (strain SS9).